The sequence spans 182 residues: Crossover junction endodeoxyribonuclease RuvC (182 aa).

Active-site residues include Asp-7, Glu-69, and Asp-141. Positions 7, 69, and 141 each coordinate Mg(2+).

This sequence belongs to the RuvC family. In terms of assembly, homodimer which binds Holliday junction (HJ) DNA. The HJ becomes 2-fold symmetrical on binding to RuvC with unstacked arms; it has a different conformation from HJ DNA in complex with RuvA. In the full resolvosome a probable DNA-RuvA(4)-RuvB(12)-RuvC(2) complex forms which resolves the HJ. The cofactor is Mg(2+).

Its subcellular location is the cytoplasm. It carries out the reaction Endonucleolytic cleavage at a junction such as a reciprocal single-stranded crossover between two homologous DNA duplexes (Holliday junction).. In terms of biological role, the RuvA-RuvB-RuvC complex processes Holliday junction (HJ) DNA during genetic recombination and DNA repair. Endonuclease that resolves HJ intermediates. Cleaves cruciform DNA by making single-stranded nicks across the HJ at symmetrical positions within the homologous arms, yielding a 5'-phosphate and a 3'-hydroxyl group; requires a central core of homology in the junction. The consensus cleavage sequence is 5'-(A/T)TT(C/G)-3'. Cleavage occurs on the 3'-side of the TT dinucleotide at the point of strand exchange. HJ branch migration catalyzed by RuvA-RuvB allows RuvC to scan DNA until it finds its consensus sequence, where it cleaves and resolves the cruciform DNA. This Polaromonas naphthalenivorans (strain CJ2) protein is Crossover junction endodeoxyribonuclease RuvC.